Consider the following 228-residue polypeptide: Eukaryotic translation initiation factor 4E-2 (228 aa).

A disulfide bridge links C130 with C134.

The protein belongs to the eukaryotic initiation factor 4E family. In terms of assembly, eIF4F is a multi-subunit complex, the composition of which varies with external and internal environmental conditions. It is composed of at least eIF4A, eIF4E and eIF4G. eIF4E is also known to interact with other partners. As to expression, highly expressed in all somatic tissues.

Functionally, recognizes and binds the 7-methylguanosine-containing mRNA cap during an early step in the initiation of protein synthesis and facilitates ribosome binding by inducing the unwinding of the mRNAs secondary structures. All 5 eIF4E proteins bind monomethyl cap structures. Only ife-1, ife-2 and ife-5 bind trimethyl cap structures which result from trans-splicing. Translation of trimethyl cap structure mRNAs may be regulated by intracellular redox state; disulfide bonds change the width and depth of the cap-binding cavity determining selectivity to mRNA caps. Probably by regulating mRNA translation in somatic cells, negatively regulates lifespan independently of daf-2/insulin and let-363/TOR pathways. Negatively regulates resistance to oxidative stress. May play a role in embryonic development. The sequence is that of Eukaryotic translation initiation factor 4E-2 (ife-2) from Caenorhabditis elegans.